A 366-amino-acid chain; its full sequence is Peptide chain release factor 2 (366 aa).

Residue Q253 is modified to N5-methylglutamine.

It belongs to the prokaryotic/mitochondrial release factor family. Methylated by PrmC. Methylation increases the termination efficiency of RF2.

Its subcellular location is the cytoplasm. Functionally, peptide chain release factor 2 directs the termination of translation in response to the peptide chain termination codons UGA and UAA. The protein is Peptide chain release factor 2 (prfB) of Buchnera aphidicola subsp. Baizongia pistaciae (strain Bp).